We begin with the raw amino-acid sequence, 188 residues long: GTP cyclohydrolase 1 (188 aa).

The Zn(2+) site is built by C78, H81, and C150.

It belongs to the GTP cyclohydrolase I family. As to quaternary structure, homomer.

The catalysed reaction is GTP + H2O = 7,8-dihydroneopterin 3'-triphosphate + formate + H(+). Its pathway is cofactor biosynthesis; 7,8-dihydroneopterin triphosphate biosynthesis; 7,8-dihydroneopterin triphosphate from GTP: step 1/1. The sequence is that of GTP cyclohydrolase 1 from Geobacillus sp. (strain WCH70).